We begin with the raw amino-acid sequence, 953 residues long: Serine-aspartate repeat-containing protein C (953 aa).

The first 50 residues, 1 to 50 (MNNKKTATNRKGMIPNRLNKFSIRKYSVGTASILVGTTLIFGLSGHEAKA), serve as a signal peptide directing secretion. Residues 51–160 (AEHTNGELNQ…AKNVSTTPKT (110 aa)) form a disordered region. The tract at residues 51 to 495 (AEHTNGELNQ…GSSTANGDQK (445 aa)) is ligand binding A region. Over residues 56-71 (GELNQSKNETTAPSEN) the composition is skewed to polar residues. The span at 72–83 (KTTEKVDSRQLK) shows a compositional bias: basic and acidic residues. Positions 84–114 (DNTQTATADQPKVTMSDSATVKETSSNMQSP) are enriched in polar residues. Low complexity predominate over residues 115–132 (QNATASQSTTQTSNVTTN). Residues 133-160 (DKSSTTYSNETDKSNLTQAKNVSTTPKT) show a composition bias toward polar residues. CNA-B domains are found at residues 496–606 (KYNL…YKTP) and 607–717 (KYSL…EEET). The tract at residues 678-933 (TQTGTNTTED…NNSNNGTLFG (256 aa)) is disordered. Acidic residues-rich tracts occupy residues 685 to 695 (TEDDKDADGGE) and 712 to 892 (YYEE…DSDS). Residues 916–920 (LPETG) carry the LPXTG sorting signal motif. Over residues 918–933 (ETGSENNNSNNGTLFG) the composition is skewed to low complexity. Thr-919 carries the post-translational modification Pentaglycyl murein peptidoglycan amidated threonine. The propeptide at 920-953 (GSENNNSNNGTLFGGLFAALGSLLLFGRRKKQNK) is removed by sortase.

This sequence belongs to the serine-aspartate repeat-containing protein (SDr) family. As to quaternary structure, homodimerizes; via N2-Domain. Interacts with host NRXN1; this interaction mediates bacterial attachment to host cells.

The protein resides in the secreted. The protein localises to the cell wall. Functionally, cell surface-associated calcium-binding protein which plays an important role in adhesion and pathogenesis. Mediates interactions with components of the extracellular matrix such as host NRXN1 to promote bacterial adhesion. This is Serine-aspartate repeat-containing protein C (sdrC) from Staphylococcus aureus (strain Mu50 / ATCC 700699).